A 224-amino-acid chain; its full sequence is Non-structural protein V (224 aa).

Positions 54–65 (QKNIQHPTASHQ) are enriched in polar residues. 2 disordered regions span residues 54 to 96 (QKNI…DPEP) and 150 to 171 (TEFK…GGHR). Positions 170, 189, 193, 205, 207, 210, 214, and 217 each coordinate Zn(2+).

This sequence belongs to the paramyxoviruses V protein family. As to quaternary structure, interacts with host IFIH1/MDA5 and DHX58/LGP2. Forms with host DDB1, CUL4A, STAT1, STAT2 and STAT3 the mumps virus V-dependent complex (VDC).

It is found in the virion. The protein localises to the host cytoplasm. Functionally, plays an essential role in the inhibition of host immune response. Prevents the establishment of cellular antiviral state by blocking interferon-alpha/beta (IFN-alpha/beta) production and signaling pathway. Interacts with host IFIH1/MDA5 and DHX58/LGP2 to inhibit the transduction pathway involved in the activation of IFN-beta promoter, thus protecting the virus against cell antiviral state. Blocks the type I and II interferon signaling pathways by interacting with host STAT1, STAT2 and STAT3, and mediating their ubiquitination and subsequent proteasomal degradation. The sequence is that of Non-structural protein V from Mumps virus (strain SBL) (MuV).